A 353-amino-acid chain; its full sequence is Outer membrane protein P5 (353 aa).

The signal sequence occupies residues 1 to 21 (MKKTAIALVVAGLAAASVAQA). 8 beta stranded membrane passes run 27–37 (TFYAGVKAGQA), 58–69 (SFTYGVFGGYQI), 77–85 (LAVELGYDD), 104–115 (HGTHLSLKGSYE), 120–128 (LDVYGKAGV), 158–167 (GLFAVGAEYA), 172–179 (LAVRLEYQ), and 205–213 (SINAGISYR). The 127-residue stretch at 227-353 (VVSKTFSLNS…RVEIAVNGTK (127 aa)) folds into the OmpA-like domain. Cysteine 326 and cysteine 338 are disulfide-bonded.

The protein belongs to the outer membrane OOP (TC 1.B.6) superfamily. OmpA family. In terms of assembly, monomer and homodimer.

It localises to the cell outer membrane. Its function is as follows. With TolR probably plays a role in maintaining the position of the peptidoglycan cell wall in the periplasm. Acts as a porin with low permeability that allows slow penetration of small solutes; an internal gate slows down solute passage. Functionally, reconstitution in planar bilayers with lithium dodecyl sulfate-solublized P5 yields narrow pores (58 pS conductance) with a low probability of opening, whereas n-octyl-bD-glucopyranoside-solubilized P5 forms large pores (1.1 nS conductance) with high open probability. The large pore easily converts to the smaller pore at room temperature; at 42 degrees Celsius the smaller pore converts to the larger one. The sequence is that of Outer membrane protein P5 from Haemophilus influenzae (strain ATCC 51907 / DSM 11121 / KW20 / Rd).